The sequence spans 184 residues: Ribulose bisphosphate carboxylase small subunit, chloroplastic 5 (184 aa).

The transit peptide at 1-43 directs the protein to the chloroplast; it reads MAAAMMNKTIVVSKDGCARSSSIPKVATNKMGFASAVAMKKSR.

The protein belongs to the RuBisCO small chain family. Heterohexadecamer of 8 large and 8 small subunits.

Its subcellular location is the plastid. The protein resides in the chloroplast. Its function is as follows. RuBisCO catalyzes two reactions: the carboxylation of D-ribulose 1,5-bisphosphate, the primary event in carbon dioxide fixation, as well as the oxidative fragmentation of the pentose substrate. Both reactions occur simultaneously and in competition at the same active site. Although the small subunit is not catalytic it is essential for maximal activity. In Acetabularia peniculus (Green alga), this protein is Ribulose bisphosphate carboxylase small subunit, chloroplastic 5.